The primary structure comprises 755 residues: Cellulose synthase-like protein B4 (755 aa).

2 consecutive transmembrane segments (helical) span residues 24–44 (AVDL…ILHV) and 49–69 (TVWI…LLIT). Active-site residues include Asp-136 and Asp-461. Transmembrane regions (helical) follow at residues 533 to 556 (AYLY…LPAY), 569 to 589 (VYLG…LWEF), 615 to 635 (LFSV…VFIV), 674 to 694 (FLPG…CLVG), 702 to 722 (GSGL…LPFL), and 733 to 753 (IPFS…VLSV).

This sequence belongs to the glycosyltransferase 2 family. Plant cellulose synthase-like B subfamily.

The protein localises to the golgi apparatus membrane. Its function is as follows. Thought to be a Golgi-localized beta-glycan synthase that polymerize the backbones of noncellulosic polysaccharides (hemicelluloses) of plant cell wall. The protein is Cellulose synthase-like protein B4 (CSLB4) of Arabidopsis thaliana (Mouse-ear cress).